Consider the following 320-residue polypeptide: Cytochrome f (320 aa).

Positions 1–35 are cleaved as a signal peptide; sequence MQNRNTFSWVKEEMTRFISVSIMIYVITRTSISNA. Heme contacts are provided by Y36, C56, C59, and H60. Residues 286-306 form a helical membrane-spanning segment; the sequence is VQGLLFFLASVILAQIFLVLK.

It belongs to the cytochrome f family. As to quaternary structure, the 4 large subunits of the cytochrome b6-f complex are cytochrome b6, subunit IV (17 kDa polypeptide, petD), cytochrome f and the Rieske protein, while the 4 small subunits are PetG, PetL, PetM and PetN. The complex functions as a dimer. It depends on heme as a cofactor.

The protein resides in the plastid. It is found in the chloroplast thylakoid membrane. Component of the cytochrome b6-f complex, which mediates electron transfer between photosystem II (PSII) and photosystem I (PSI), cyclic electron flow around PSI, and state transitions. The sequence is that of Cytochrome f from Calycanthus floridus var. glaucus (Eastern sweetshrub).